The chain runs to 931 residues: NEDD4-binding protein 1 (931 aa).

A KH-like domain is found at 75 to 159 (GKAVRSAKEY…VQQFVKLFEN (85 aa)). Disordered regions lie at residues 289–329 (MTSK…HNDS), 413–474 (QEWS…TQVD), and 547–571 (CTSA…NSHS). Basic and acidic residues-rich tracts occupy residues 290 to 309 (TSKE…ESLP) and 319 to 329 (QEVKSVSHNDS). A compositionally biased stretch (polar residues) spans 416–434 (SSKTPKTTNLRLGSNANSS). Basic and acidic residues-rich tracts occupy residues 435 to 444 (HKLEDEDISC) and 456 to 467 (NETRTERHKARD). Polar residues predominate over residues 547–557 (CTSAKSKTAVH). One can recognise an RNase NYN domain in the interval 659–811 (LKHIIIDGSN…LGRNGPRLDD (153 aa)). Positions 841–863 (LFMHVPNPASSSQQPKNRAHGDH) are disordered. A coCUN region spans residues 884–931 (RSASETVWLREALIKIFPDYEQRQKIDKILADHPFMRDLNALSAMVLD).

It belongs to the N4BP1 family.

The protein localises to the cytoplasm. Its subcellular location is the cytosol. It localises to the nucleus. The protein resides in the nucleolus. It is found in the PML body. In terms of biological role, potent suppressor of cytokine production that acts as a regulator of innate immune signaling and inflammation. Acts as a key negative regulator of select cytokine and chemokine responses elicited by TRIF-independent Toll-like receptors (TLRs), thereby limiting inflammatory cytokine responses to minor insults. Has ribonuclease activity. The chain is NEDD4-binding protein 1 from Gallus gallus (Chicken).